We begin with the raw amino-acid sequence, 84 residues long: Small ribosomal subunit protein uS17 (84 aa).

Belongs to the universal ribosomal protein uS17 family. As to quaternary structure, part of the 30S ribosomal subunit.

In terms of biological role, one of the primary rRNA binding proteins, it binds specifically to the 5'-end of 16S ribosomal RNA. This Hamiltonella defensa subsp. Acyrthosiphon pisum (strain 5AT) protein is Small ribosomal subunit protein uS17.